A 1909-amino-acid chain; its full sequence is Nck-associated protein 5 (1909 aa).

A coiled-coil region spans residues 71–253; that stretch reads EKLIHELEEE…DLEQQNRTLS (183 aa). Disordered regions lie at residues 351–370, 736–819, 855–997, 1026–1469, 1486–1509, 1541–1592, 1725–1750, and 1763–1885; these read SSYT…SQNW, EEDT…LMEP, PLFE…KKPS, SSSF…APLS, KGQV…FASW, GFGN…RTPQ, FPLP…DAEP, and SMRA…DYGD. A compositionally biased stretch (basic and acidic residues) spans 736–748; the sequence is EEDTEKNIPKDNV. Composition is skewed to polar residues over residues 753–789, 950–965, 981–990, and 1066–1084; these read RVST…SRSS, APSS…SETA, VISSNPATTE, and PRIS…SKSV. Low complexity-rich tracts occupy residues 1110–1131 and 1178–1187; these read SPSS…HNSP and ASKSSVAVNK. Basic and acidic residues predominate over residues 1241 to 1250; the sequence is DGRDGVDNRS. A compositionally biased stretch (polar residues) spans 1300–1325; it reads QIITNTAERGNSLTRQNSSTESSPNK. The span at 1339–1366 shows a compositional bias: low complexity; it reads GRPSGHPSSGKGSLGSSGSFSSQHGSPS. Residues 1428–1446 are compositionally biased toward polar residues; sequence PGRTQHPSTFETSSTSKLE. The span at 1454 to 1466 shows a compositional bias: low complexity; the sequence is ASATATDAVSSEA. Composition is skewed to basic and acidic residues over residues 1547 to 1560 and 1567 to 1576; these read LKSE…KPEL and ELIKDTKSAD. Residues 1869–1878 are compositionally biased toward polar residues; that stretch reads YSASGGSNSD.

As to quaternary structure, interacts with the SH3-containing region of the adapter protein NCK. In terms of tissue distribution, expressed in fetal and adult brain, leukocytes and fetal fibroblasts.

The protein is Nck-associated protein 5 (NCKAP5) of Homo sapiens (Human).